A 368-amino-acid chain; its full sequence is Zinc finger protein 24 (368 aa).

Lysine 22 participates in a covalent cross-link: Glycyl lysine isopeptide (Lys-Gly) (interchain with G-Cter in SUMO2). Lysine 27 is covalently cross-linked (Glycyl lysine isopeptide (Lys-Gly) (interchain with G-Cter in SUMO1); alternate). Lysine 27 participates in a covalent cross-link: Glycyl lysine isopeptide (Lys-Gly) (interchain with G-Cter in SUMO2); alternate. The 83-residue stretch at 52–134 folds into the SCAN box domain; the sequence is RQRFRQFGYQ…AVLEDLESEL (83 aa). Phosphoserine occurs at positions 132 and 142. Glycyl lysine isopeptide (Lys-Gly) (interchain with G-Cter in SUMO2) cross-links involve residues lysine 147, lysine 177, and lysine 236. The C2H2-type 1 zinc-finger motif lies at 251–273; sequence HICDECGKHFSQGSALILHQRIH. The segment at 251-301 is necessary and sufficient for nuclear localization; the sequence is HICDECGKHFSQGSALILHQRIHSGEKPYGCVECGKAFSRSSILVQHQRVH. Serine 274 carries the phosphoserine modification. Residues lysine 277 and lysine 286 each participate in a glycyl lysine isopeptide (Lys-Gly) (interchain with G-Cter in SUMO2) cross-link. 3 C2H2-type zinc fingers span residues 279 to 301, 307 to 329, and 335 to 357; these read YGCV…QRVH, YKCL…QRIH, and YECV…QRRH. Serine 292 carries the post-translational modification Phosphoserine. Phosphotyrosine is present on tyrosine 335. Residues lysine 361 and lysine 367 each participate in a glycyl lysine isopeptide (Lys-Gly) (interchain with G-Cter in SUMO2) cross-link.

Belongs to the krueppel C2H2-type zinc-finger protein family. In terms of processing, sumoylated. Widely expressed with highest levels in heart, brain, liver, skeletal muscle, kidney and testis and very low levels in spleen and lung.

It localises to the nucleus. In terms of biological role, transcription factor required for myelination of differentiated oligodendrocytes. Required for the conversion of oligodendrocytes from the premyelinating to the myelinating state. In the developing central nervous system (CNS), involved in the maintenance in the progenitor stage by promoting the cell cycle. Specifically binds to the 5'-TCAT-3' DNA sequence. Has transcription repressor activity in vitro. The chain is Zinc finger protein 24 from Mus musculus (Mouse).